Consider the following 411-residue polypeptide: 1-deoxy-D-xylulose 5-phosphate reductoisomerase (411 aa).

Residues T23, G24, S25, I26, G49, R50, N51, and N137 each contribute to the NADPH site. Residue K138 coordinates 1-deoxy-D-xylulose 5-phosphate. E139 serves as a coordination point for NADPH. Mn(2+) is bound at residue D163. 1-deoxy-D-xylulose 5-phosphate-binding residues include S164, E165, S199, and H222. Residue E165 coordinates Mn(2+). G228 is a binding site for NADPH. 1-deoxy-D-xylulose 5-phosphate contacts are provided by S235, N240, K241, and E244. E244 contributes to the Mn(2+) binding site.

This sequence belongs to the DXR family. Requires Mg(2+) as cofactor. The cofactor is Mn(2+).

The catalysed reaction is 2-C-methyl-D-erythritol 4-phosphate + NADP(+) = 1-deoxy-D-xylulose 5-phosphate + NADPH + H(+). Its pathway is isoprenoid biosynthesis; isopentenyl diphosphate biosynthesis via DXP pathway; isopentenyl diphosphate from 1-deoxy-D-xylulose 5-phosphate: step 1/6. Catalyzes the NADPH-dependent rearrangement and reduction of 1-deoxy-D-xylulose-5-phosphate (DXP) to 2-C-methyl-D-erythritol 4-phosphate (MEP). This chain is 1-deoxy-D-xylulose 5-phosphate reductoisomerase, found in Mannheimia succiniciproducens (strain KCTC 0769BP / MBEL55E).